We begin with the raw amino-acid sequence, 531 residues long: Putative F-box protein At2g02890 (531 aa).

The F-box domain maps to 141–188; the sequence is RHSSSLTNDLIEEILSRLHSKSVARFRCVSKQCASMFASPYFKKLFQT.

The polypeptide is Putative F-box protein At2g02890 (Arabidopsis thaliana (Mouse-ear cress)).